Reading from the N-terminus, the 128-residue chain is Protein yippee-like At3g08990 (128 aa).

Positions 12 to 109 constitute a Yippee domain; it reads LVYSCKYCQT…LERFKVLGPY (98 aa). Cys16, Cys19, Cys72, and Cys75 together coordinate Zn(2+).

Belongs to the yippee family.

The protein is Protein yippee-like At3g08990 of Arabidopsis thaliana (Mouse-ear cress).